Here is a 142-residue protein sequence, read N- to C-terminus: UPF0305 protein MK0666 (142 aa).

The protein belongs to the UPF0305 family.

The protein is UPF0305 protein MK0666 of Methanopyrus kandleri (strain AV19 / DSM 6324 / JCM 9639 / NBRC 100938).